The chain runs to 215 residues: MTAVNIWKPEDNIPREILAILSKPHPNYQLAFLNIIQLLKTQRRTGWVDHGIDPCESISDHMYRMGLTTMLITDKNVDRNKCIRIALVHDFAESLVGDITPNDPMTKEEKHRREFETVKYLCESIIRPCSESASREILDDWLAYEKQTCLEGRYVKDIDKYEMLVQCFEYEQKYNGKKDLKQFLGAINDIKTDEVKKWTQSLLEDRQAFFDSLKE.

The 107-residue stretch at 58-164 folds into the HD domain; it reads ISDHMYRMGL…VKDIDKYEML (107 aa). Residues H61, H89, D90, E93, D98, I99, and D159 each contribute to the a divalent metal cation site.

The protein belongs to the HDDC2 family. As to quaternary structure, homodimer. Mn(2+) is required as a cofactor. It depends on Co(2+) as a cofactor. The cofactor is Mg(2+).

It carries out the reaction a 2'-deoxyribonucleoside 5'-phosphate + H2O = a 2'-deoxyribonucleoside + phosphate. Functionally, catalyzes the dephosphorylation of the nucleoside 5'-monophosphates deoxyadenosine monophosphate (dAMP), deoxycytidine monophosphate (dCMP), deoxyguanosine monophosphate (dGMP) and deoxythymidine monophosphate (dTMP). The protein is 5'-deoxynucleotidase YGK1 of Saccharomyces cerevisiae (strain ATCC 204508 / S288c) (Baker's yeast).